The primary structure comprises 465 residues: Serine/threonine-protein kinase 38 (465 aa).

N-acetylalanine is present on Ala-2. Positions 62 to 87 (KRLRRSAHARKETEFLRLKRTRLGLE) are interaction with S100B. The residue at position 74 (Thr-74) is a Phosphothreonine. The Protein kinase domain occupies 89–382 (FESLKVIGRG…VEEIKNNSFF (294 aa)). ATP contacts are provided by residues 95–103 (IGRGAFGEV) and Lys-118. Asp-212 acts as the Proton acceptor in catalysis. Ser-264 carries the post-translational modification Phosphoserine. Position 281 is a phosphoserine; by autocatalysis (Ser-281). A UFM1-interacting motif (UFIM) motif is present at residues 306–311 (WSLGVI). The region spanning 383–455 (EGVDWEHIRE…KRFEGLTARG (73 aa)) is the AGC-kinase C-terminal domain. A Phosphothreonine; by STK24/MST3 modification is found at Thr-444.

This sequence belongs to the protein kinase superfamily. AGC Ser/Thr protein kinase family. Homodimeric S100B binds two molecules of STK38. Interacts with MOB1 and MOB2. Interacts with MAP3K1 and MAP3K2 (via the kinase domain). Forms a tripartite complex with MOBKL1B and STK3/MST2. Interacts with MICAL1; leading to inhibit the protein kinase activity by antagonizing activation by MST1/STK4. Mg(2+) is required as a cofactor. ISGylated. In terms of processing, phosphorylated by STK3/MST2 and this is enhanced by MOBKL1B.

The protein resides in the nucleus. Its subcellular location is the cytoplasm. The protein localises to the chromosome. It catalyses the reaction L-seryl-[protein] + ATP = O-phospho-L-seryl-[protein] + ADP + H(+). The catalysed reaction is L-threonyl-[protein] + ATP = O-phospho-L-threonyl-[protein] + ADP + H(+). Its activity is regulated as follows. Activated by binding of S100B which releases autoinhibitory N-lobe interactions, enabling ATP to bind and the autophosphorylation of Ser-281. Thr-444 then undergoes calcium-dependent phosphorylation by STK24/MST3. Interactions between phosphorylated Thr-444 and the N-lobe promote additional structural changes that complete the activation of the kinase. Autoinhibition is also released by the binding of MOB1/MOBKL1A and MOB2/HCCA2 to the N-terminal of STK38. Functionally, serine/threonine-protein kinase that acts as a negative regulator of MAP3K1/2 signaling. Converts MAP3K2 from its phosphorylated form to its non-phosphorylated form and inhibits autophosphorylation of MAP3K2. Acts as an ufmylation 'reader' in a kinase-independent manner: specifically recognizes and binds mono-ufmylated histone H4 in response to DNA damage, promoting the recruitment of SUV39H1 to the double-strand breaks, resulting in ATM activation. The sequence is that of Serine/threonine-protein kinase 38 (STK38) from Bos taurus (Bovine).